A 78-amino-acid polypeptide reads, in one-letter code: Large ribosomal subunit protein bL28 (78 aa).

This sequence belongs to the bacterial ribosomal protein bL28 family.

In Colwellia psychrerythraea (strain 34H / ATCC BAA-681) (Vibrio psychroerythus), this protein is Large ribosomal subunit protein bL28.